A 510-amino-acid polypeptide reads, in one-letter code: NAD(P)H-quinone oxidoreductase subunit 2 B, chloroplastic (510 aa).

13 consecutive transmembrane segments (helical) span residues 24 to 44, 59 to 79, 99 to 119, 124 to 144, 149 to 169, 184 to 204, 229 to 249, 262 to 284, 295 to 315, 323 to 343, 354 to 374, 395 to 415, and 418 to 438; these read LLLF…GLIL, WFYF…LFRW, IFQF…VEYI, MAIT…MFLC, LITI…LSGY, LLMG…LYGL, ISIA…LAPF, TPVV…TRIF, WHLL…LIAI, MLAY…IVGD, YMLF…LFGL, ALSL…AGFF, and LHLF…IGLL.

Belongs to the complex I subunit 2 family. In terms of assembly, NDH is composed of at least 16 different subunits, 5 of which are encoded in the nucleus.

It is found in the plastid. The protein localises to the chloroplast thylakoid membrane. It carries out the reaction a plastoquinone + NADH + (n+1) H(+)(in) = a plastoquinol + NAD(+) + n H(+)(out). It catalyses the reaction a plastoquinone + NADPH + (n+1) H(+)(in) = a plastoquinol + NADP(+) + n H(+)(out). NDH shuttles electrons from NAD(P)H:plastoquinone, via FMN and iron-sulfur (Fe-S) centers, to quinones in the photosynthetic chain and possibly in a chloroplast respiratory chain. The immediate electron acceptor for the enzyme in this species is believed to be plastoquinone. Couples the redox reaction to proton translocation, and thus conserves the redox energy in a proton gradient. In Lemna minor (Common duckweed), this protein is NAD(P)H-quinone oxidoreductase subunit 2 B, chloroplastic.